The following is a 206-amino-acid chain: dCTP deaminase, dUMP-forming (206 aa).

Residues 117–122 (RSSFGR), aspartate 135, 143–145 (TLE), glutamine 163, tyrosine 177, lysine 184, and glutamine 188 contribute to the dCTP site. Catalysis depends on glutamate 145, which acts as the Proton donor/acceptor.

It belongs to the dCTP deaminase family. As to quaternary structure, homotrimer.

It carries out the reaction dCTP + 2 H2O = dUMP + NH4(+) + diphosphate. It participates in pyrimidine metabolism; dUMP biosynthesis; dUMP from dCTP: step 1/1. Its function is as follows. Bifunctional enzyme that catalyzes both the deamination of dCTP to dUTP and the hydrolysis of dUTP to dUMP without releasing the toxic dUTP intermediate. In Methanococcus maripaludis (strain C6 / ATCC BAA-1332), this protein is dCTP deaminase, dUMP-forming.